Consider the following 521-residue polypeptide: MSLSRSEEMHRLTENVYKTIMEQFNPSLRNFIAMGKNYEKALAGVTYAAKGYFDALVKMGELASESQGSKELGDVLFQMAEVHRQIQNQLEEMLKSFHNELLTQLEQKVELDSRYLSAALKKYQTEQRSKGDALDKCQAELKKLRKKSQGSKNPQKYSDKELQYIDAIGNKQGELESYVSDGYKTALTEERRRFCFLVEKQCAVAKNSAAYHSKGKELLAQKLPLWQQACADPNKIPDRAVQLMQQMGNSNGSILPSGLSASKSNLVISDPIPGAKPLPVPPELAPFVGRLSAQENAPVMNGVSGPDSEDYNPWADRKATQPKSTSPPQSQSKLSDSYSNTLPVRKSVAPKNSYATTENKTLPRSSSMAAGLERNGRMRVKAIFSHAAGDNSTLLSFKEGDLITLLVPEARDGWHYGESEKTKMRGWFPFSYTRVLDNDGGDRLHMSLQQGKSSSTGNLLDKEDLALPPPDYGTSSRAFPTQTAGAFKQRPYSVAVPAFSQGLDDYGARAVSSADVEVARF.

The region spanning 1-250 (MSLSRSEEMH…VQLMQQMGNS (250 aa)) is the IMD domain. Residues 132-153 (DALDKCQAELKKLRKKSQGSKN) are a coiled coil. Residues Ser262, Ser324, Ser326, and Ser337 each carry the phosphoserine modification. Residues 297 to 370 (APVMNGVSGP…TLPRSSSMAA (74 aa)) are disordered. Residues 321 to 333 (QPKSTSPPQSQSK) are compositionally biased toward low complexity. Phosphothreonine is present on Thr341. Ser347 is subject to Phosphoserine. A compositionally biased stretch (polar residues) spans 353 to 368 (SYATTENKTLPRSSSM). The residue at position 361 (Thr361) is a Phosphothreonine. Ser367, Ser385, Ser396, and Ser455 each carry phosphoserine. An SH3 domain is found at 375 to 438 (NGRMRVKAIF…PFSYTRVLDN (64 aa)). Residues 450 to 471 (QGKSSSTGNLLDKEDLALPPPD) form a disordered region.

Homodimer. Interacts with CDC42 and RAC1 that have been activated by GTP binding. Interacts with ATN1, ADGRB1, DIAPH1, EPS8, SHANK1, SHANK2, SHANK3, TIAM1, WASF1 and WASF2. Interacts with ENAH after recruitment of CDC42. In terms of processing, phosphorylated on tyrosine residues by INSR in response to insulin treatment.

The protein resides in the cytoplasm. It localises to the membrane. It is found in the cell projection. The protein localises to the filopodium. Its subcellular location is the ruffle. The protein resides in the cytoskeleton. Adapter protein that links membrane-bound small G-proteins to cytoplasmic effector proteins. Necessary for CDC42-mediated reorganization of the actin cytoskeleton and for RAC1-mediated membrane ruffling. Involved in the regulation of the actin cytoskeleton by WASF family members and the Arp2/3 complex. Plays a role in neurite growth. Acts syngeristically with ENAH to promote filipodia formation. Plays a role in the reorganization of the actin cytoskeleton in response to bacterial infection. Participates in actin bundling when associated with EPS8, promoting filopodial protrusions. This Bos taurus (Bovine) protein is BAR/IMD domain-containing adapter protein 2 (BAIAP2).